Consider the following 477-residue polypeptide: Exodeoxyribonuclease 7 large subunit (477 aa).

A disordered region spans residues 456-477 (GGTVAPRKAPPKKPGGGQGSLL).

This sequence belongs to the XseA family. As to quaternary structure, heterooligomer composed of large and small subunits.

It localises to the cytoplasm. It catalyses the reaction Exonucleolytic cleavage in either 5'- to 3'- or 3'- to 5'-direction to yield nucleoside 5'-phosphates.. Functionally, bidirectionally degrades single-stranded DNA into large acid-insoluble oligonucleotides, which are then degraded further into small acid-soluble oligonucleotides. The protein is Exodeoxyribonuclease 7 large subunit of Parvibaculum lavamentivorans (strain DS-1 / DSM 13023 / NCIMB 13966).